Consider the following 436-residue polypeptide: Tol-Pal system protein TolB (436 aa).

The first 28 residues, 1–28 (MEMLRRNFFRLLMVLVAGCGLIASPANA), serve as a signal peptide directing secretion.

It belongs to the TolB family. The Tol-Pal system is composed of five core proteins: the inner membrane proteins TolA, TolQ and TolR, the periplasmic protein TolB and the outer membrane protein Pal. They form a network linking the inner and outer membranes and the peptidoglycan layer.

The protein localises to the periplasm. Part of the Tol-Pal system, which plays a role in outer membrane invagination during cell division and is important for maintaining outer membrane integrity. The protein is Tol-Pal system protein TolB of Rhizobium meliloti (strain 1021) (Ensifer meliloti).